We begin with the raw amino-acid sequence, 388 residues long: Chaperone protein DnaJ (388 aa).

In terms of domain architecture, J spans 4–69 (DYYDILGVDE…EKRQRYDQFG (66 aa)). 3 stretches are compositionally biased toward basic and acidic residues: residues 27–50 (KAMEYHPDRNPDDPEAEQKFKEAS), 58–73 (DPEKRQRYDQFGHDGV), and 113–124 (GRSERGRGRPGS). Disordered regions lie at residues 27-86 (KAME…GRGR) and 99-125 (SDIFGGAPGGGRGRGRSERGRGRPGSD). Residues 140 to 225 (GTEKNLRLQK…CGGEGRVQGE (86 aa)) form a CR-type zinc finger. Positions 153, 156, 173, 176, 199, 202, 213, and 216 each coordinate Zn(2+). CXXCXGXG motif repeat units follow at residues 153–160 (CESCDGTG), 173–180 (CPKCDGTG), 199–206 (CPRCEGEG), and 213–220 (CDDCGGEG). Residues 362–376 (AHDNFQPRPPEEDTQ) show a composition bias toward basic and acidic residues. The disordered stretch occupies residues 362–388 (AHDNFQPRPPEEDTQKSFFRRVSDVFS).

The protein belongs to the DnaJ family. Homodimer. Zn(2+) serves as cofactor.

It is found in the cytoplasm. Its function is as follows. Participates actively in the response to hyperosmotic and heat shock by preventing the aggregation of stress-denatured proteins and by disaggregating proteins, also in an autonomous, DnaK-independent fashion. Unfolded proteins bind initially to DnaJ; upon interaction with the DnaJ-bound protein, DnaK hydrolyzes its bound ATP, resulting in the formation of a stable complex. GrpE releases ADP from DnaK; ATP binding to DnaK triggers the release of the substrate protein, thus completing the reaction cycle. Several rounds of ATP-dependent interactions between DnaJ, DnaK and GrpE are required for fully efficient folding. Also involved, together with DnaK and GrpE, in the DNA replication of plasmids through activation of initiation proteins. The protein is Chaperone protein DnaJ of Salinibacter ruber (strain DSM 13855 / M31).